Consider the following 437-residue polypeptide: Palmitoyltransferase PFA4 (437 aa).

Residues 1-12 (MAGLNDVPFIKG) are Cytoplasmic-facing. Residues 13–33 (LAVPSVCALIIFLGYASQFLF) form a helical membrane-spanning segment. Over 34–48 (NYSTTLEPGPPTRRE) the chain is Lumenal. The chain crosses the membrane as a helical span at residues 49–69 (TIIFNGLLLVLWITYYRTVAT). Over 70–130 (DPGRYIFKDR…RNCVSMTTFP (61 aa)) the chain is Cytoplasmic. Residues 87 to 137 (RWCNKCAAPKPPRAHHCRHCARCVPRMDHHCPWTRNCVSMTTFPHFLRFLI) form the DHHC domain. Cysteine 117 functions as the S-palmitoyl cysteine intermediate in the catalytic mechanism. A helical transmembrane segment spans residues 131–151 (HFLRFLIYTNMSLWMLGYFLW). The Lumenal portion of the chain corresponds to 152–173 (QRFSKIWEHRRLPAYLGPSFYG). A helical membrane pass occupies residues 174–194 (LICLSLISIVNFVTTVALGIM). The Cytoplasmic segment spans residues 195–437 (LINTVKSWVF…KILKKDGLDD (243 aa)). Residues 377 to 419 (LDQGLGWVNSDGDRLRDYGVDEEASEPEGVNDDDDDDDDDDVP) form a disordered region. Positions 396-419 (VDEEASEPEGVNDDDDDDDDDDVP) are enriched in acidic residues.

This sequence belongs to the DHHC palmitoyltransferase family. PFA4 subfamily.

It is found in the endoplasmic reticulum membrane. The catalysed reaction is L-cysteinyl-[protein] + hexadecanoyl-CoA = S-hexadecanoyl-L-cysteinyl-[protein] + CoA. Functionally, mediates the reversible addition of palmitate to target proteins, thereby regulating their membrane association and biological function. The chain is Palmitoyltransferase PFA4 from Gibberella zeae (strain ATCC MYA-4620 / CBS 123657 / FGSC 9075 / NRRL 31084 / PH-1) (Wheat head blight fungus).